Here is an 875-residue protein sequence, read N- to C-terminus: Serine/threonine-protein phosphatase 4 regulatory subunit 4 (875 aa).

HEAT repeat units follow at residues 215–253 and 254–292; these read ILPL…TKNV and VLPE…RSQT. A coiled-coil region spans residues 686–730; that stretch reads MFQKKNYEKDLLDQEKEREELLFLEMEQLEKEKHQSDGRLASDKS. The span at 718-739 shows a compositional bias: basic and acidic residues; the sequence is KHQSDGRLASDKSFEKKRRDSR. A disordered region spans residues 718 to 773; it reads KHQSDGRLASDKSFEKKRRDSRTSTQSLSKNLPISVPGPSSSTASTSKEIKKSKLT. The span at 740–764 shows a compositional bias: polar residues; sequence TSTQSLSKNLPISVPGPSSSTASTS. A Phosphoserine modification is found at serine 777. The residue at position 799 (threonine 799) is a Phosphothreonine. A compositionally biased stretch (polar residues) spans 825–859; sequence RNASSVPASFSPNPVMPSTSRGPGNTADPKSSGSK. Residues 825-875 form a disordered region; sequence RNASSVPASFSPNPVMPSTSRGPGNTADPKSSGSKDAQPRKATLKSRKSNP. A compositionally biased stretch (basic residues) spans 866 to 875; sequence ATLKSRKSNP.

As to quaternary structure, serine/threonine-protein phosphatase 4 (PP4) occurs in different assemblies of the catalytic and one or more regulatory subunits. Component of the PP4 complex PPP4C-PPP4R4.

The protein resides in the cytoplasm. Functionally, putative regulatory subunit of serine/threonine-protein phosphatase 4. The sequence is that of Serine/threonine-protein phosphatase 4 regulatory subunit 4 (Ppp4r4) from Mus musculus (Mouse).